A 218-amino-acid chain; its full sequence is Large ribosomal subunit protein uL3 (218 aa).

A disordered region spans residues 137–157 (GVGASHGAHKNHRKPGSIGGA).

It belongs to the universal ribosomal protein uL3 family. In terms of assembly, part of the 50S ribosomal subunit. Forms a cluster with proteins L14 and L19.

Functionally, one of the primary rRNA binding proteins, it binds directly near the 3'-end of the 23S rRNA, where it nucleates assembly of the 50S subunit. The sequence is that of Large ribosomal subunit protein uL3 from Kocuria rhizophila (strain ATCC 9341 / DSM 348 / NBRC 103217 / DC2201).